The sequence spans 341 residues: Cyclin-Y (341 aa).

A lipid anchor (N-myristoyl glycine) is attached at Gly2. Phosphoserine occurs at positions 21 and 25. Thr30 carries the phosphothreonine modification. At Ser33 the chain carries Phosphoserine. Thr37 carries the phosphothreonine modification. The residue at position 67 (Thr67) is a Phosphothreonine; by CDK14. Ser71 and Ser73 each carry phosphoserine; by CDK14. Thr75 is modified (phosphothreonine). Ser83 carries the phosphoserine; by CDK14 modification. A phosphoserine mark is found at Ser99, Ser100, and Ser102. In terms of domain architecture, Cyclin N-terminal spans 143–265 (DIFDENLHPL…FLELLQFNIN (123 aa)). Ser280 carries the post-translational modification Phosphoserine. Phosphoserine; by CDK14 occurs at positions 288 and 295. Residues Ser324 and Ser326 each carry the phosphoserine modification. Residue Thr331 is modified to Phosphothreonine.

Belongs to the cyclin family. Cyclin Y subfamily. In terms of assembly, found in a complex with CAPRIN2, LRP6 and CDK14 during G2/M stage; CAPRIN2 functions as a scaffold for the complex by binding to CCNY via its N terminus and to CDK14 via its C terminus. Interacts with CDK14. Interacts with CDK16. Interacts with LRP6. Post-translationally, ubiquitinated; leading to its degradation. Heavily phosphorylated. Phosphorylation at Ser-71 and Ser-73 by CDK14 is enhanced during the G2 and M cell cycle phases, and creates a phosphodegron triggering SCF-dependent ubiquitination. As to expression, widely expressed.

It is found in the cell membrane. Its subcellular location is the nucleus. Its function is as follows. Positive regulatory subunit of the cyclin-dependent kinases CDK14/PFTK1 and CDK16. Acts as a cell-cycle regulator of Wnt signaling pathway during G2/M phase by recruiting CDK14/PFTK1 to the plasma membrane and promoting phosphorylation of LRP6, leading to the activation of the Wnt signaling pathway. Recruits CDK16 to the plasma membrane. Isoform 3 might play a role in the activation of MYC-mediated transcription. The chain is Cyclin-Y (CCNY) from Homo sapiens (Human).